The sequence spans 224 residues: 2-C-methyl-D-erythritol 4-phosphate cytidylyltransferase (224 aa).

Belongs to the IspD/TarI cytidylyltransferase family. IspD subfamily.

The catalysed reaction is 2-C-methyl-D-erythritol 4-phosphate + CTP + H(+) = 4-CDP-2-C-methyl-D-erythritol + diphosphate. It functions in the pathway isoprenoid biosynthesis; isopentenyl diphosphate biosynthesis via DXP pathway; isopentenyl diphosphate from 1-deoxy-D-xylulose 5-phosphate: step 2/6. Functionally, catalyzes the formation of 4-diphosphocytidyl-2-C-methyl-D-erythritol from CTP and 2-C-methyl-D-erythritol 4-phosphate (MEP). This Caldicellulosiruptor saccharolyticus (strain ATCC 43494 / DSM 8903 / Tp8T 6331) protein is 2-C-methyl-D-erythritol 4-phosphate cytidylyltransferase.